The primary structure comprises 130 residues: Small ribosomal subunit protein uS8 (130 aa).

Belongs to the universal ribosomal protein uS8 family. Part of the 30S ribosomal subunit.

One of the primary rRNA binding proteins, it binds directly to 16S rRNA central domain where it helps coordinate assembly of the platform of the 30S subunit. This chain is Small ribosomal subunit protein uS8, found in Methanopyrus kandleri (strain AV19 / DSM 6324 / JCM 9639 / NBRC 100938).